A 192-amino-acid chain; its full sequence is Transcription termination/antitermination protein NusG (192 aa).

The KOW domain maps to 140 to 168 (VGEIVIVTDGPFETFTGTVEEIDQEKNRL).

The protein belongs to the NusG family.

Its function is as follows. Participates in transcription elongation, termination and antitermination. This is Transcription termination/antitermination protein NusG from Rickettsia felis (strain ATCC VR-1525 / URRWXCal2) (Rickettsia azadi).